Reading from the N-terminus, the 1390-residue chain is DNA-directed RNA polymerase subunit beta (1390 aa).

It belongs to the RNA polymerase beta chain family. The RNAP catalytic core consists of 2 alpha, 1 beta, 1 beta' and 1 omega subunit. When a sigma factor is associated with the core the holoenzyme is formed, which can initiate transcription.

It carries out the reaction RNA(n) + a ribonucleoside 5'-triphosphate = RNA(n+1) + diphosphate. DNA-dependent RNA polymerase catalyzes the transcription of DNA into RNA using the four ribonucleoside triphosphates as substrates. The protein is DNA-directed RNA polymerase subunit beta of Rhodopseudomonas palustris (strain HaA2).